The sequence spans 280 residues: DegV domain-containing protein TTE1491 (280 aa).

The DegV domain occupies I4–E279. 2 residues coordinate hexadecanoate: T61 and S93.

In terms of biological role, may bind long-chain fatty acids, such as palmitate, and may play a role in lipid transport or fatty acid metabolism. The protein is DegV domain-containing protein TTE1491 of Caldanaerobacter subterraneus subsp. tengcongensis (strain DSM 15242 / JCM 11007 / NBRC 100824 / MB4) (Thermoanaerobacter tengcongensis).